The sequence spans 318 residues: UAP56-interacting factor (318 aa).

Position 1 is an N-acetylmethionine (Met1). A disordered region spans residues 1–27 (MNRFSTRLMGATATPPPAPPKARSNEN). Residue Thr14 is modified to Phosphothreonine. Position 24 is a phosphoserine (Ser24). The UAP56-binding motif signature appears at 27 to 45 (NLDKIDMSLDDIIKLNRKE). Phosphoserine occurs at positions 61 and 118. A Glycyl lysine isopeptide (Lys-Gly) (interchain with G-Cter in SUMO1) cross-link involves residue Lys140. Residues 163–180 (LNRKNNIPNNFTRSGNKL) show a composition bias toward polar residues. The tract at residues 163-183 (LNRKNNIPNNFTRSGNKLSHQ) is disordered. A Glycyl lysine isopeptide (Lys-Gly) (interchain with G-Cter in SUMO2) cross-link involves residue Lys261.

This sequence belongs to the UIF family. In terms of assembly, interacts with DDX39B/UAP56 and NXF1; interaction with DDX39B/UAP56 and NXF1 are mutually exclusive. Interacts with SSRP1; required for its recruitment to mRNAs. Interacts with CHTOP.

The protein localises to the nucleus. It localises to the nucleoplasm. Its subcellular location is the nucleus speckle. Its function is as follows. Required for mRNA export from the nucleus to the cytoplasm. Acts as an adapter that uses the DDX39B/UAP56-NFX1 pathway to ensure efficient mRNA export and delivering to the nuclear pore. Associates with spliced and unspliced mRNAs simultaneously with ALYREF/THOC4. This chain is UAP56-interacting factor (FYTTD1), found in Bos taurus (Bovine).